The primary structure comprises 678 residues: Inositol-trisphosphate 3-kinase C (678 aa).

Disordered stretches follow at residues 26–128 (LEAL…RRNS) and 151–300 (DLQS…LDLS). Residues 44-58 (PGAGGPTGRPEGGGP) are compositionally biased toward gly residues. 2 stretches are compositionally biased toward basic and acidic residues: residues 61 to 76 (WIEE…RTDL) and 107 to 116 (EKPRQNKELD). At serine 160 the chain carries Phosphoserine. Composition is skewed to basic and acidic residues over residues 173–196 (ELDR…DNLR) and 220–236 (SGKE…HDTD). Residues 318–326 (LCPVPRLII) carry the Nuclear export signal motif. Residues 328 to 380 (PETPEPEAQPVGPQSRIEGGTGGFSSASSFDESEDDLVAGGGGTSDPEDRAGS) are disordered. A Phosphothreonine modification is found at threonine 330. Phosphoserine is present on serine 398. ATP is bound by residues lysine 426, 466–468 (EDL), and aspartate 479. Residues lysine 481, 502 to 508 (RKDMYEK), and 529 to 536 (KPRYMQWR) contribute to the substrate site. The calmodulin-binding stretch occupies residues 504 to 512 (DMYEKMVAV). The ATP site is built by lysine 553 and aspartate 633. Lysine 636 contacts substrate.

Belongs to the inositol phosphokinase (IPK) family.

It is found in the nucleus. The protein localises to the cytoplasm. The catalysed reaction is 1D-myo-inositol 1,4,5-trisphosphate + ATP = 1D-myo-inositol 1,3,4,5-tetrakisphosphate + ADP + H(+). With respect to regulation, activated by calcium/calmodulin. Inhibited by high concentrations of the substrate Ins(1,2,4)P3, and allosterically activated by the product Ins(1,3,4,5)P4. Catalyzes the phosphorylation of 1D-myo-inositol 1,4,5-trisphosphate (InsP3) into 1D-myo-inositol 1,3,4,5-tetrakisphosphate and participates to the regulation of calcium homeostasis. Can phosphorylate inositol 2,4,5-triphosphate to inositol 2,4,5,6-tetraphosphate. This is Inositol-trisphosphate 3-kinase C (Itpkc) from Mus musculus (Mouse).